Reading from the N-terminus, the 283-residue chain is 2-dehydro-3-deoxyphosphooctonate aldolase (283 aa).

This sequence belongs to the KdsA family.

It is found in the cytoplasm. The catalysed reaction is D-arabinose 5-phosphate + phosphoenolpyruvate + H2O = 3-deoxy-alpha-D-manno-2-octulosonate-8-phosphate + phosphate. It functions in the pathway carbohydrate biosynthesis; 3-deoxy-D-manno-octulosonate biosynthesis; 3-deoxy-D-manno-octulosonate from D-ribulose 5-phosphate: step 2/3. The protein operates within bacterial outer membrane biogenesis; lipopolysaccharide biosynthesis. The polypeptide is 2-dehydro-3-deoxyphosphooctonate aldolase (Vibrio cholerae serotype O1 (strain ATCC 39315 / El Tor Inaba N16961)).